A 544-amino-acid chain; its full sequence is CTP synthase (544 aa).

The interval 1-267 (MTKFVFVTGG…AQRVLEILNL (267 aa)) is amidoligase domain. CTP is bound at residue serine 13. Position 13 (serine 13) interacts with UTP. 14–19 (SIGKGI) lines the ATP pocket. Tyrosine 54 serves as a coordination point for L-glutamine. An ATP-binding site is contributed by aspartate 71. Aspartate 71 and glutamate 141 together coordinate Mg(2+). Residues 148 to 150 (DIE), 188 to 193 (KTKPTQ), and lysine 224 contribute to the CTP site. UTP is bound by residues 188–193 (KTKPTQ) and lysine 224. The 243-residue stretch at 292-534 (EIAIVGKYVR…IEAALRSRPQ (243 aa)) folds into the Glutamine amidotransferase type-1 domain. Residue glycine 354 participates in L-glutamine binding. Residue cysteine 381 is the Nucleophile; for glutamine hydrolysis of the active site. L-glutamine-binding positions include 382–385 (LGMQ), glutamate 405, and arginine 462. Residues histidine 507 and glutamate 509 contribute to the active site.

It belongs to the CTP synthase family. In terms of assembly, homotetramer.

It catalyses the reaction UTP + L-glutamine + ATP + H2O = CTP + L-glutamate + ADP + phosphate + 2 H(+). The enzyme catalyses L-glutamine + H2O = L-glutamate + NH4(+). It carries out the reaction UTP + NH4(+) + ATP = CTP + ADP + phosphate + 2 H(+). Its pathway is pyrimidine metabolism; CTP biosynthesis via de novo pathway; CTP from UDP: step 2/2. With respect to regulation, allosterically activated by GTP, when glutamine is the substrate; GTP has no effect on the reaction when ammonia is the substrate. The allosteric effector GTP functions by stabilizing the protein conformation that binds the tetrahedral intermediate(s) formed during glutamine hydrolysis. Inhibited by the product CTP, via allosteric rather than competitive inhibition. Its function is as follows. Catalyzes the ATP-dependent amination of UTP to CTP with either L-glutamine or ammonia as the source of nitrogen. Regulates intracellular CTP levels through interactions with the four ribonucleotide triphosphates. The protein is CTP synthase of Synechococcus sp. (strain JA-2-3B'a(2-13)) (Cyanobacteria bacterium Yellowstone B-Prime).